We begin with the raw amino-acid sequence, 110 residues long: NADH-quinone oxidoreductase subunit K (110 aa).

Helical transmembrane passes span 7 to 27, 31 to 51, and 73 to 93; these read LGSY…GVFV, IIAI…NFIA, and IFVI…VIAI.

Belongs to the complex I subunit 4L family. In terms of assembly, NDH-1 is composed of 14 different subunits. Subunits NuoA, H, J, K, L, M, N constitute the membrane sector of the complex.

Its subcellular location is the cell membrane. The catalysed reaction is a quinone + NADH + 5 H(+)(in) = a quinol + NAD(+) + 4 H(+)(out). Functionally, NDH-1 shuttles electrons from NADH, via FMN and iron-sulfur (Fe-S) centers, to quinones in the respiratory chain. The immediate electron acceptor for the enzyme in this species is believed to be a menaquinone. Couples the redox reaction to proton translocation (for every two electrons transferred, four hydrogen ions are translocated across the cytoplasmic membrane), and thus conserves the redox energy in a proton gradient. The protein is NADH-quinone oxidoreductase subunit K of Desulfitobacterium hafniense (strain DSM 10664 / DCB-2).